The sequence spans 192 residues: MAIKGLEQAVENLSRISKTAVPGAAAMAINRVASSAISQSASQVARETKVRRKLVKERARLKRATVKNPQARIKVNRGDLPVIKLGNARVVLSRRRRRKKGQRSSLKGGGSVLVVGNRRIPGAFIQQLKNGRWHVMQRVAGKNRYPIDVVKIPMAVPLTTAFKQNIERIRRERLPKELGYALQHQLRMVIKR.

This sequence belongs to the Lambdalikevirus tail completion protein family.

It is found in the virion. Its subcellular location is the host cytoplasm. Functionally, stabilizes the tail structure and acts as a connector between the end of tail and the portal vertex of the capsid. This is Tail completion protein Z (Z) from Escherichia phage lambda (Bacteriophage lambda).